We begin with the raw amino-acid sequence, 577 residues long: Signal peptide peptidase-like 2B (577 aa).

Residues 1-19 (MAAARLAASLLLLAAQVAC) form the signal peptide. The Lumenal segment spans residues 20-168 (EFGVLRVVPQ…APSEPVMDYN (149 aa)). In terms of domain architecture, PA spans 49–149 (LPHDLNKVSL…RDLQDIFRRF (101 aa)). A glycan (N-linked (GlcNAc...) asparagine) is linked at asparagine 91. A helical transmembrane segment spans residues 169-189 (MVIIFIMAVGTVALGGYWAGS). Residues 190–216 (HDVKKYMKHKRDDVPEKQEDEAVDVTP) are Cytoplasmic-facing. The chain crosses the membrane as a helical span at residues 217 to 237 (VMICVFVVMCCFMLVLLYYFY). Residues 238-239 (DR) lie on the Lumenal side of the membrane. The chain crosses the membrane as a helical span at residues 240–260 (LVYVIIGIFCLASSTGLYSCL). The Cytoplasmic portion of the chain corresponds to 261–286 (APCVRKLPFCTCRVPDNNLPYFHKRP). The helical transmembrane segment at 287–307 (QARMLLLALFCVTVSVVWGVF) threads the bilayer. Residues 308 to 312 (RNEDQ) are Lumenal-facing. The helical transmembrane segment at 313–333 (WAWVLQDTLGIAFCLYMLRTI) threads the bilayer. At 334-341 (RLPTFKAC) the chain is on the cytoplasmic side. Residues 342 to 362 (TLLLLVLFVYDIFFVFITPYL) form a helical membrane-spanning segment. Residue aspartate 352 is part of the active site. Topologically, residues 363-405 (TKSGNSIMVEVATGPSNSSTHEKLPMVLKVPRLNTSPLSLCDR) are lumenal. The chain crosses the membrane as a helical span at residues 406 to 426 (PFSLLGFGDILVPGLLVAYCH). The active site involves aspartate 414. The Cytoplasmic segment spans residues 427–438 (RFDIQVQSSRIY). A helical transmembrane segment spans residues 439-459 (FVACTIAYGLGLLVTFVALVL). Residues 460–463 (MRHG) lie on the Lumenal side of the membrane. Residues 464 to 484 (QPALLYLVPCTLLTSCTVALW) form a helical membrane-spanning segment. A PAL motif is present at residues 465 to 467 (PAL). The Cytoplasmic portion of the chain corresponds to 485–577 (RREMGAFWTG…IPVVTPGTSA (93 aa)). The segment at 502 to 577 (QTPWAAPQGP…IPVVTPGTSA (76 aa)) is disordered.

The protein belongs to the peptidase A22B family. In terms of assembly, monomer. Homodimer. Interacts with ITM2B and TNF. Post-translationally, glycosylated.

The protein localises to the cell membrane. The protein resides in the golgi apparatus membrane. Its subcellular location is the lysosome membrane. It localises to the endosome membrane. It is found in the membrane. Functionally, intramembrane-cleaving aspartic protease (I-CLiP) that cleaves type II membrane signal peptides in the hydrophobic plane of the membrane. Functions in ITM2B and TNF processing. Catalyzes the intramembrane cleavage of the anchored fragment of shed TNF-alpha (TNF), which promotes the release of the intracellular domain (ICD) for signaling to the nucleus. May play a role in the regulation of innate and adaptive immunity. This Rattus norvegicus (Rat) protein is Signal peptide peptidase-like 2B.